We begin with the raw amino-acid sequence, 209 residues long: Orotate phosphoribosyltransferase (209 aa).

Residues R96, K100, H102, and 122–130 each bind 5-phospho-alpha-D-ribose 1-diphosphate; that span reads EDLISTGGS. S126 serves as a coordination point for orotate.

The protein belongs to the purine/pyrimidine phosphoribosyltransferase family. PyrE subfamily. Homodimer. The cofactor is Mg(2+).

It carries out the reaction orotidine 5'-phosphate + diphosphate = orotate + 5-phospho-alpha-D-ribose 1-diphosphate. It participates in pyrimidine metabolism; UMP biosynthesis via de novo pathway; UMP from orotate: step 1/2. Catalyzes the transfer of a ribosyl phosphate group from 5-phosphoribose 1-diphosphate to orotate, leading to the formation of orotidine monophosphate (OMP). The sequence is that of Orotate phosphoribosyltransferase from Streptococcus sanguinis (strain SK36).